A 630-amino-acid chain; its full sequence is tRNA uridine 5-carboxymethylaminomethyl modification enzyme MnmG (630 aa).

G13–G18 contributes to the FAD binding site. Position 273–287 (G273–F287) interacts with NAD(+).

This sequence belongs to the MnmG family. In terms of assembly, homodimer. Heterotetramer of two MnmE and two MnmG subunits. It depends on FAD as a cofactor.

The protein localises to the cytoplasm. Functionally, NAD-binding protein involved in the addition of a carboxymethylaminomethyl (cmnm) group at the wobble position (U34) of certain tRNAs, forming tRNA-cmnm(5)s(2)U34. The protein is tRNA uridine 5-carboxymethylaminomethyl modification enzyme MnmG of Saccharophagus degradans (strain 2-40 / ATCC 43961 / DSM 17024).